Here is a 277-residue protein sequence, read N- to C-terminus: MFAVSSRRVLPGFTLSLGTSLLFVCLILLLPLSALVMQLAQMSWAQYWEVITNPQVVAAYKVTLLSAFVASIFNGVFGLLMAWILTRYRFPGRTLLDALMDLPFALPTAVAGLTLASLFSVNGFYGEWLAKFDIKVTYTWLGIAVAMAFTSIPFVVRTVQPVLEELGPEYEEAAETLGATRWQSFCKVVLPELSPALVAGVALSFTRSLGEFGAVIFIAGNIAWKTEVTSLMIFVRLQEFDYPAASAIASVILAASLLLLFSINTLQSRFGRRVVGH.

The next 7 helical transmembrane spans lie at 17-37 (LGTS…ALVM), 64-84 (LLSA…MAWI), 99-119 (LMDL…ASLF), 136-156 (VTYT…PFVV), 185-205 (FCKV…ALSF), 215-235 (VIFI…MIFV), and 243-263 (PAAS…LFSI). The region spanning 60 to 263 (YKVTLLSAFV…AASLLLLFSI (204 aa)) is the ABC transmembrane type-1 domain.

This sequence belongs to the binding-protein-dependent transport system permease family. CysTW subfamily. As to quaternary structure, the complex is composed of two ATP-binding proteins (CysA), two transmembrane proteins (CysT and CysW) and a solute-binding protein (CysP).

The protein resides in the cell inner membrane. Its function is as follows. Part of the ABC transporter complex CysAWTP (TC 3.A.1.6.1) involved in sulfate/thiosulfate import. Probably responsible for the translocation of the substrate across the membrane. This chain is Sulfate transport system permease protein CysT (cysU), found in Escherichia coli (strain K12).